Reading from the N-terminus, the 759-residue chain is Subtilisin-like protease SBT3.16 (759 aa).

The first 33 residues, M1–A33, serve as a signal peptide directing secretion. A propeptide spans A34–K119 (activation peptide). Residues Y41 to L118 enclose the Inhibitor I9 domain. The Peptidase S8 domain maps to S124–A608. D153 functions as the Charge relay system in the catalytic mechanism. N-linked (GlcNAc...) asparagine glycans are attached at residues N186 and N209. The Charge relay system role is filled by H229. Residue N371 is glycosylated (N-linked (GlcNAc...) asparagine). S539 functions as the Charge relay system in the catalytic mechanism. Residues N632 and N711 are each glycosylated (N-linked (GlcNAc...) asparagine).

The protein belongs to the peptidase S8 family.

The protein localises to the secreted. The chain is Subtilisin-like protease SBT3.16 from Arabidopsis thaliana (Mouse-ear cress).